We begin with the raw amino-acid sequence, 463 residues long: Elongation factor 1-alpha 2 (463 aa).

The residue at position 2 (G2) is a N,N,N-trimethylglycine. One can recognise a tr-type G domain in the interval 5-242 (KTHINIVVIG…DTILPPTRPT (238 aa)). Positions 14–21 (GHVDSGKS) are G1. GTP-binding residues include D17, S18, G19, K20, S21, and T22. D17 contributes to the Mg(2+) binding site. N6,N6,N6-trimethyllysine; alternate is present on K36. The residue at position 36 (K36) is an N6,N6-dimethyllysine; alternate. K36 is modified (N6-methyllysine; alternate). At K55 the chain carries N6,N6,N6-trimethyllysine. N6,N6-dimethyllysine is present on K55. A G2 region spans residues 70-74 (GITID). K79 carries the post-translational modification N6,N6,N6-trimethyllysine. The segment at 91 to 94 (DAPG) is G3. Residues N153, K154, and D156 each coordinate GTP. The tract at residues 153-156 (NKMD) is G4. S163 carries the post-translational modification Phosphoserine. Residue K165 is modified to N6,N6-dimethyllysine; alternate. An N6-methyllysine; alternate modification is found at K165. K165 bears the N6,N6,N6-trimethyllysine; alternate; by EEF1AKMT3 mark. K179 carries the post-translational modification N6-acetyllysine. GTP is bound by residues S194, G195, and W196. Residues 194–196 (SGW) are G5. S224 is modified (phosphoserine). Residue T239 is modified to Phosphothreonine. 5-glutamyl glycerylphosphorylethanolamine is present on residues E301 and E374. K439 is modified (N6-acetyllysine). A disordered region spans residues 444–463 (KSGGAGKVTKSAQKAQKAGK).

This sequence belongs to the TRAFAC class translation factor GTPase superfamily. Classic translation factor GTPase family. EF-Tu/EF-1A subfamily. As to quaternary structure, homodimer; arranged in a 'head to tail' dimer configuration. Trimethylated at Lys-165 by EEF1AKMT3. Mono-, di-, and trimethylated at Lys-36 by EEF1AKMT4; trimethylated form is predominant. Methylation by EEF1AKMT4 contributes to the fine-tuning of translation rates for a subset of tRNAs. Trimethylated at the N-terminus and dimethylated at Lys-55 by METTL13.

It is found in the endoplasmic reticulum membrane. The enzyme catalyses GTP + H2O = GDP + phosphate + H(+). Its function is as follows. Translation elongation factor that catalyzes the GTP-dependent binding of aminoacyl-tRNA (aa-tRNA) to the A-site of ribosomes during the elongation phase of protein synthesis. Base pairing between the mRNA codon and the aa-tRNA anticodon promotes GTP hydrolysis, releasing the aa-tRNA from EEF1A1 and allowing its accommodation into the ribosome. The growing protein chain is subsequently transferred from the P-site peptidyl tRNA to the A-site aa-tRNA, extending it by one amino acid through ribosome-catalyzed peptide bond formation. In Rattus norvegicus (Rat), this protein is Elongation factor 1-alpha 2 (Eef1a2).